The chain runs to 353 residues: 3'(2'),5'-bisphosphate nucleotidase 1 (353 aa).

Asp46 (proton acceptor) is an active-site residue. Residues Glu71, Asp134, Ile136, and Asp137 each contribute to the Mg(2+) site. The active-site Proton acceptor is the Thr139. Residues Thr139, His235, Ser259, Lys262, Arg276, and Asp288 each coordinate adenosine 3',5'-bisphosphate. 5 residues coordinate AMP: His235, Ser259, Lys262, Arg276, and Asp288. Residue Asp288 coordinates Mg(2+).

The protein belongs to the inositol monophosphatase superfamily. Mg(2+) serves as cofactor. As to expression, expressed in roots, leaves, stems, flowers and siliques.

It carries out the reaction 3'-phosphoadenylyl sulfate + H2O = adenosine 5'-phosphosulfate + phosphate. The catalysed reaction is adenosine 3',5'-bisphosphate + H2O = AMP + phosphate. It catalyses the reaction adenosine 2',5'-bisphosphate + H2O = AMP + phosphate. The enzyme catalyses 1D-myo-inositol 1,4-bisphosphate + H2O = 1D-myo-inositol 4-phosphate + phosphate. It carries out the reaction 1D-myo-inositol 1,3,4-trisphosphate + H2O = 1D-myo-inositol 3,4-bisphosphate + phosphate. It participates in signal transduction; phosphatidylinositol signaling pathway. Its activity is regulated as follows. Inhibited non-competitively by Li(+) (IC(50)=0.20 mM) and Na(+) (IC(50)=200 mM). In terms of biological role, phosphatase that converts adenosine 3'-phosphate 5'-phosphosulfate (PAPS) to adenosine 5'-phosphosulfate (APS) and 3'(2')-phosphoadenosine 5'-phosphate (PAP) to AMP. May regulate the flux of sulfur in the sulfur-activation pathway by converting PAPS to APS. May play a role in the biosynthesis of sulfate conjugates and RNA processing. Is also able to hydrolyze inositol 1,4-bisphosphate and inositol 1,3,4-trisphosphate. Could be considered as a negative regulator of abscisic acid (ABA)- and stress-responsive genes, through modulating the inositol 1,4,5-trisphosphate (IP3) turnover. Is also involved in salt tolerance. Acts as a suppressor of virus- and transgene-induced silencing. This is 3'(2'),5'-bisphosphate nucleotidase 1 from Arabidopsis thaliana (Mouse-ear cress).